Consider the following 752-residue polypeptide: Ribosomal RNA large subunit methyltransferase K/L (752 aa).

The region spanning 53-164 (QMYKICLWTR…RDELHISIDL (112 aa)) is the THUMP domain.

The protein belongs to the methyltransferase superfamily. RlmKL family.

The protein localises to the cytoplasm. It catalyses the reaction guanosine(2445) in 23S rRNA + S-adenosyl-L-methionine = N(2)-methylguanosine(2445) in 23S rRNA + S-adenosyl-L-homocysteine + H(+). The catalysed reaction is guanosine(2069) in 23S rRNA + S-adenosyl-L-methionine = N(2)-methylguanosine(2069) in 23S rRNA + S-adenosyl-L-homocysteine + H(+). Functionally, specifically methylates the guanine in position 2445 (m2G2445) and the guanine in position 2069 (m7G2069) of 23S rRNA. In Saccharophagus degradans (strain 2-40 / ATCC 43961 / DSM 17024), this protein is Ribosomal RNA large subunit methyltransferase K/L.